The primary structure comprises 206 residues: Dephospho-CoA kinase (206 aa).

Positions 4–200 constitute a DPCK domain; sequence TVALTGGIGS…ASYLKLASQF (197 aa). Residue 12-17 coordinates ATP; that stretch reads GSGKST.

This sequence belongs to the CoaE family.

The protein localises to the cytoplasm. The catalysed reaction is 3'-dephospho-CoA + ATP = ADP + CoA + H(+). It participates in cofactor biosynthesis; coenzyme A biosynthesis; CoA from (R)-pantothenate: step 5/5. Its function is as follows. Catalyzes the phosphorylation of the 3'-hydroxyl group of dephosphocoenzyme A to form coenzyme A. This Salmonella paratyphi A (strain ATCC 9150 / SARB42) protein is Dephospho-CoA kinase.